Reading from the N-terminus, the 264-residue chain is Endoglucanase S (264 aa).

Residues 1 to 32 form the signal peptide; sequence MQTVNTQPHRIFRVLLPAVFSSLLLSSLTVSA.

This sequence belongs to the glycosyl hydrolase 12 (cellulase H) family.

The catalysed reaction is Endohydrolysis of (1-&gt;4)-beta-D-glucosidic linkages in cellulose, lichenin and cereal beta-D-glucans.. In Pectobacterium parmentieri, this protein is Endoglucanase S (celS).